We begin with the raw amino-acid sequence, 909 residues long: E3 ubiquitin-protein ligase HACE1 (909 aa).

Positions 1–21 (MERAMEQLNRLTRSLRRARTV) are N-terminal helix important for homodimerization. ANK repeat units follow at residues 23–55 (LPEDNETAVYTLMPMVMADQHRSVSELLSNSKF), 64–93 (VKRSLLHIAANCGSVECLVLLLKKGANPNY), 97–126 (SGCTPLHLAARNGQKKCMSKLLEYSADVNI), 130–159 (EGLTAIHWLAVNGRTELLHDLVQHVSDVDV), 163–192 (MGQTALHVACQNGHKTTVQCLLDSGADINR), 196–226 (SGATPLYFACSHGQRDTAQILLLRGAKYLPD), and 228–253 (NGVTPLDLCVQGGYGETCEVLIQYHP). Positions 398 to 433 (QDQDAASIPPFEPPGPGSYENLSTGTRESKPDALAG) are disordered. An HECT domain is found at 574-909 (NCAKLKQGIA…HCGSYGYTMA (336 aa)). The active-site Glycyl thioester intermediate is the C876.

As to quaternary structure, homodimer. The homodimer is autoinhibited and stabilized by its N-terminal helix. Interacts with RAB1 (RAB1A, RAB1B or RAB1C), RAB4 (RAB4A or RAB4B) and RAB11 (RAB11A or RAB11B); in a GTP-dependent manner. Interacts with the 26S proteasomal complex through the 20S core proteasomal subunit. Interacts with RARB. Post-translationally, autoubiquitinated. As to expression, expressed in multiple tissues including heart, brain and kidney.

It localises to the golgi apparatus. Its subcellular location is the golgi stack membrane. The protein localises to the cytoplasm. It is found in the endoplasmic reticulum. It catalyses the reaction S-ubiquitinyl-[E2 ubiquitin-conjugating enzyme]-L-cysteine + [acceptor protein]-L-lysine = [E2 ubiquitin-conjugating enzyme]-L-cysteine + N(6)-ubiquitinyl-[acceptor protein]-L-lysine.. It functions in the pathway protein modification; protein ubiquitination. With respect to regulation, sterically autoinhibited in its dimeric state. E3 ubiquitin-protein ligase involved in Golgi membrane fusion and regulation of small GTPases. Acts as a regulator of Golgi membrane dynamics during the cell cycle: recruited to Golgi membrane by Rab proteins and regulates postmitotic Golgi membrane fusion. Acts by mediating ubiquitination during mitotic Golgi disassembly, ubiquitination serving as a signal for Golgi reassembly later, after cell division. Specifically binds GTP-bound RAC1, mediating ubiquitination and subsequent degradation of active RAC1, thereby playing a role in host defense against pathogens. May also act as a transcription regulator via its interaction with RARB. The sequence is that of E3 ubiquitin-protein ligase HACE1 (HACE1) from Homo sapiens (Human).